The chain runs to 329 residues: DNA-directed RNA polymerase subunit alpha (329 aa).

The interval 1 to 234 (MQGSVTEFLK…EQLDAFVELR (234 aa)) is alpha N-terminal domain (alpha-NTD). Positions 248 to 329 (FDPILLRPVD…WPPASLADDL (82 aa)) are alpha C-terminal domain (alpha-CTD).

This sequence belongs to the RNA polymerase alpha chain family. In terms of assembly, homodimer. The RNAP catalytic core consists of 2 alpha, 1 beta, 1 beta' and 1 omega subunit. When a sigma factor is associated with the core the holoenzyme is formed, which can initiate transcription.

The enzyme catalyses RNA(n) + a ribonucleoside 5'-triphosphate = RNA(n+1) + diphosphate. Its function is as follows. DNA-dependent RNA polymerase catalyzes the transcription of DNA into RNA using the four ribonucleoside triphosphates as substrates. In Shewanella putrefaciens (strain CN-32 / ATCC BAA-453), this protein is DNA-directed RNA polymerase subunit alpha.